A 178-amino-acid polypeptide reads, in one-letter code: Large ribosomal subunit protein uL10 (178 aa).

This sequence belongs to the universal ribosomal protein uL10 family. As to quaternary structure, part of the ribosomal stalk of the 50S ribosomal subunit. The N-terminus interacts with L11 and the large rRNA to form the base of the stalk. The C-terminus forms an elongated spine to which L12 dimers bind in a sequential fashion forming a multimeric L10(L12)X complex.

In terms of biological role, forms part of the ribosomal stalk, playing a central role in the interaction of the ribosome with GTP-bound translation factors. In Gloeothece citriformis (strain PCC 7424) (Cyanothece sp. (strain PCC 7424)), this protein is Large ribosomal subunit protein uL10.